The sequence spans 1038 residues: MDPLTKGSCGSQLAQTLLWKAKSSLSFGIQPLQTWPTKDPELESQVNLSVSEDLGCRRGDFSRKHYGSVELLISSDADGAIQRAGRFRVENGSTDESAAALPGTWRRTDVHLENPEYHTRWYFKYFLGQVHQNYIGNDAEKSPFFLSVTLSDQNNQRVPQYRAILWRKTGTQKICLPYSPTKTLSVKSILSAMNLDKFEKGPREIFHPEIQKDLLVLEEQEGSVNFKFGVLFAKDGQLTDDEMFSNEIGSEAFQKFLNLLGDTITLKGWTGYRGGLDTKNNTTGINSVYTVYQGHEVMFHVSTMLPYSKENRQQVERKRHIGNDIVTIVFQEGEESSPAFKPSMIRSHFTHIFALVRYDQQNDNYRLKIFSEESVPLFGPPLPSPPVFTDHQEFRDFLLVKLINGEKATLETPTFAQKRRRTLDMLIRSLYQDLMPDLHKNMLNRRSFSDVLPESPKSARKKEEARQAEFVRIGQALKLKSIVRGDAPSSLAASGMCKKEPWEPQCFCCNFPHEAVCADPWGQALLVSTDAGVLLVDDDLPSVPVFDRTLPVKQIHVLETLDLLVLRADKGKDARLFVFRLSAVQKGLDGRQTGRSRSDCRENKLEKTKGCHLYAINTHHSRELRIVVAIRNKLLLITRKPHNKPSGVPGVSLLSPLSESPVEEFQYIREICLCDSPAVMALVDGPTEESDNLICVAYRHQFDVVNESTGEAFRLHHVEANKVNFVAAIDVYEDGEAGLLLCYNYSCIYKKVCPFNGGSFLLQPSASDFQFCWNQAPYAIVCAFPYLLAFTTDSMEIRLVVNGNLVHTAVVPQLQLVASRSDIYFTAATTVHEGSSGGSSKGASAHTSPQTPPARDTPLFPSSLGEGEIQSKNLYKIPLRNLVGRSIERPLKSPLVSKVITPPTSIGLGVAAIPVTHSLSLSRMEIKEIASRTRRELLGLSDDGGTKTEGAPRAKSKTRKRLEESQGGPKPETVRSASSDRIPSGILESPASEANPEGHNHWASSEQDAGVDKEGSPGSGSSPFQLMASSEEDIIDLK.

Phosphoserine is present on residues K6 and S68. A Rap-GAP domain is found at 214 to 430 (LLVLEEQEGS…RTLDMLIRSL (217 aa)). Residues S449 and S455 each carry the phosphoserine modification. The region spanning 512–824 (PHEAVCADPW…QLVASRSDIY (313 aa)) is the CNH domain. Disordered regions lie at residues 833–863 (EGSSGGSSKGASAHTSPQTPPARDTPLFPSS) and 937–1038 (LLGL…IDLK). T851 carries the post-translational modification Phosphothreonine. Residues 1019–1028 (SGSSPFQLMA) are compositionally biased toward polar residues.

The protein belongs to the GARNL3 family.

The chain is GTPase-activating Rap/Ran-GAP domain-like protein 3 (Garnl3) from Mus musculus (Mouse).